Here is a 1023-residue protein sequence, read N- to C-terminus: Phosphoenolpyruvate carboxylase (1023 aa).

Residues histidine 199 and lysine 669 contribute to the active site.

It belongs to the PEPCase type 1 family. The cofactor is Mg(2+).

It carries out the reaction oxaloacetate + phosphate = phosphoenolpyruvate + hydrogencarbonate. Its function is as follows. Forms oxaloacetate, a four-carbon dicarboxylic acid source for the tricarboxylic acid cycle. The sequence is that of Phosphoenolpyruvate carboxylase from Trichormus variabilis (strain ATCC 29413 / PCC 7937) (Anabaena variabilis).